The primary structure comprises 561 residues: MTIDFVTLLHQSDSLLLFVVLAFGLLLGKVRFGNFQIGNTIGVLFTALLFGQMGFEFTATTENVGFMLFIFCVGIEAGPHFFSVFLRDGIHYITLTLVILLTALFLTVGLAKFFNLGPGMAAGILAGSLTSTPALVGAQDALRSGLLNLPHQTDMQSVLDNMGIGYALTYLVGLVGLMLVVRYLPSLARLDLNTEAQKIARERGLSDNESRKTYLPIIRAYRVGPELAAWIGGRTLRETGIYPHTGCYVERIRRNGILASPDGDAVIQEGDEIALVGYPESHEKLDVNYRNGKEVFDRNLLDLQIVTEEIVVKNDAVVGRHLVELNLTEKGCFLNRVVRSQIEMPFDRNIMLQKGDVLQISGEKQRVKLLANKIGFISIHSQTTDLVAFTTFFVLGLLIGSVSLVFGQLEFGLGNAVGLLLAGILMGYLRANHPTVGYVPPGALRLAKDLGLAVFMVSTGLKAGGGILDHLSQVGAVVLFSGMLVTTLPVLVGYLFGVWVLKMNPALLLGAITGARTCAPAMDVVNEAANSSIPALGYAGTYAVANVMLTLAGSFIIGFWF.

Helical transmembrane passes span 8–28 (LLHQ…LLLG), 37–57 (IGNT…GFEF), 66–86 (FMLF…SVFL), 90–110 (IHYI…TVGL), and 161–181 (NMGI…MLVV). 2 consecutive RCK C-terminal domains span residues 206–291 (SDNE…NYRN) and 293–376 (KEVF…KIGF). 5 consecutive transmembrane segments (helical) span residues 386-406 (LVAF…SLVF), 409-429 (LEFG…MGYL), 450-470 (LGLA…ILDH), 476-496 (AVVL…GYLF), and 541-561 (TYAV…GFWF).

This sequence belongs to the AAE transporter (TC 2.A.81) family. YbjL subfamily.

The protein resides in the cell membrane. This is Putative transport protein AHA_2450 from Aeromonas hydrophila subsp. hydrophila (strain ATCC 7966 / DSM 30187 / BCRC 13018 / CCUG 14551 / JCM 1027 / KCTC 2358 / NCIMB 9240 / NCTC 8049).